Consider the following 339-residue polypeptide: Starvation-sensing protein RspB (339 aa).

Residues C37, H59, C89, C92, C95, C103, and E144 each contribute to the Zn(2+) site.

It belongs to the zinc-containing alcohol dehydrogenase family. Zn(2+) serves as cofactor.

In terms of biological role, not known; probable catabolic enzyme. The protein is Starvation-sensing protein RspB of Escherichia coli (strain K12).